The primary structure comprises 133 residues: Small ribosomal subunit protein uS11 (133 aa).

This sequence belongs to the universal ribosomal protein uS11 family. As to quaternary structure, part of the 30S ribosomal subunit. Interacts with proteins S7 and S18. Binds to IF-3.

Functionally, located on the platform of the 30S subunit, it bridges several disparate RNA helices of the 16S rRNA. Forms part of the Shine-Dalgarno cleft in the 70S ribosome. This chain is Small ribosomal subunit protein uS11, found in Christiangramia forsetii (strain DSM 17595 / CGMCC 1.15422 / KT0803) (Gramella forsetii).